Reading from the N-terminus, the 104-residue chain is Gallinacin-11 (104 aa).

Residues 1–22 (MKLFSCLMALLLFLLQAVPGLG) form the signal peptide. 3 disulfides stabilise this stretch: C30–C60, C37–C53, and C43–C61.

It belongs to the beta-defensin family. Detected in outer membrane of the vitelline layer of the egg (at protein level). Expressed in the liver, gall bladder, kidney, testis, ovary and male and female reproductive tracts. Expressed in the ovarian stroma, but not in the ovarian follicles. No expression is detected in bone marrow.

It localises to the secreted. Its subcellular location is the cytoplasmic granule. Has bactericidal activity. The protein is Gallinacin-11 (GAL11) of Gallus gallus (Chicken).